A 253-amino-acid polypeptide reads, in one-letter code: MFFMALRFLIGGIILLPFAKQLTLNRDIFLLSIFTTLSTSFWAYGLLYVEPSESAVLSYTMPLIAIPLSTLILREKTTKTEVIGILIGFSGVVIYSLNLGIYFSLIGIVLTLINAFFWALFTVYFRKLRGFDATSVNAVQLLLGSLIFFTLSPIQFYFKYSINFLVDLLYVSVLGGGISFYLWNSMLKTERVSKVTVLSFSVPAVSTAVDELRGVNVNIGMIEGIGVMFLGILISRLEKKINKSNIINGRFHV.

2 consecutive EamA domains span residues 1–97 (MFFM…IYSL) and 116–237 (FFWA…ISRL). Helical transmembrane passes span 2–22 (FFMA…AKQL), 28–48 (IFLL…GLLY), 53–73 (ESAV…TLIL), 80–100 (TEVI…LNLG), 101–121 (IYFS…WALF), 138–158 (AVQL…QFYF), 162–182 (INFL…SFYL), and 214–234 (GVNV…GILI).

This sequence belongs to the EamA transporter family.

It localises to the cell membrane. This is an uncharacterized protein from Acidianus ambivalens (Desulfurolobus ambivalens).